The primary structure comprises 269 residues: Imidazole glycerol phosphate synthase subunit HisF (269 aa).

Catalysis depends on residues Asp23 and Asp142.

It belongs to the HisA/HisF family. Heterodimer of HisH and HisF.

The protein resides in the cytoplasm. The enzyme catalyses 5-[(5-phospho-1-deoxy-D-ribulos-1-ylimino)methylamino]-1-(5-phospho-beta-D-ribosyl)imidazole-4-carboxamide + L-glutamine = D-erythro-1-(imidazol-4-yl)glycerol 3-phosphate + 5-amino-1-(5-phospho-beta-D-ribosyl)imidazole-4-carboxamide + L-glutamate + H(+). The protein operates within amino-acid biosynthesis; L-histidine biosynthesis; L-histidine from 5-phospho-alpha-D-ribose 1-diphosphate: step 5/9. IGPS catalyzes the conversion of PRFAR and glutamine to IGP, AICAR and glutamate. The HisF subunit catalyzes the cyclization activity that produces IGP and AICAR from PRFAR using the ammonia provided by the HisH subunit. In Bordetella parapertussis (strain 12822 / ATCC BAA-587 / NCTC 13253), this protein is Imidazole glycerol phosphate synthase subunit HisF.